We begin with the raw amino-acid sequence, 84 residues long: ATP synthase subunit c (84 aa).

2 helical membrane passes run 13 to 33 (IAVG…WGLI) and 56 to 76 (FIFA…GFWF).

The protein belongs to the ATPase C chain family. As to quaternary structure, F-type ATPases have 2 components, F(1) - the catalytic core - and F(0) - the membrane proton channel. F(1) has five subunits: alpha(3), beta(3), gamma(1), delta(1), epsilon(1). F(0) has three main subunits: a(1), b(2) and c(10-14). The alpha and beta chains form an alternating ring which encloses part of the gamma chain. F(1) is attached to F(0) by a central stalk formed by the gamma and epsilon chains, while a peripheral stalk is formed by the delta and b chains.

The protein resides in the cell inner membrane. F(1)F(0) ATP synthase produces ATP from ADP in the presence of a proton or sodium gradient. F-type ATPases consist of two structural domains, F(1) containing the extramembraneous catalytic core and F(0) containing the membrane proton channel, linked together by a central stalk and a peripheral stalk. During catalysis, ATP synthesis in the catalytic domain of F(1) is coupled via a rotary mechanism of the central stalk subunits to proton translocation. Functionally, key component of the F(0) channel; it plays a direct role in translocation across the membrane. A homomeric c-ring of between 10-14 subunits forms the central stalk rotor element with the F(1) delta and epsilon subunits. This chain is ATP synthase subunit c, found in Acidithiobacillus ferrooxidans (strain ATCC 23270 / DSM 14882 / CIP 104768 / NCIMB 8455) (Ferrobacillus ferrooxidans (strain ATCC 23270)).